The sequence spans 371 residues: tRNA-specific 2-thiouridylase MnmA (371 aa).

ATP-binding positions include 9 to 16 and Met-35; that span reads AMSGGVDS. Cys-109 functions as the Nucleophile in the catalytic mechanism. Cys-109 and Cys-207 are joined by a disulfide. Gly-133 contacts ATP. Residues 157–159 are interaction with tRNA; it reads KDQ. The active-site Cysteine persulfide intermediate is the Cys-207.

The protein belongs to the MnmA/TRMU family.

The protein localises to the cytoplasm. It carries out the reaction S-sulfanyl-L-cysteinyl-[protein] + uridine(34) in tRNA + AH2 + ATP = 2-thiouridine(34) in tRNA + L-cysteinyl-[protein] + A + AMP + diphosphate + H(+). Functionally, catalyzes the 2-thiolation of uridine at the wobble position (U34) of tRNA, leading to the formation of s(2)U34. The polypeptide is tRNA-specific 2-thiouridylase MnmA (Solibacter usitatus (strain Ellin6076)).